Here is a 559-residue protein sequence, read N- to C-terminus: Urocanate hydratase (559 aa).

NAD(+)-binding positions include 49–50 (GG), Gln-127, 173–175 (GMG), Asp-193, Arg-198, 239–240 (NA), 260–264 (QTSAH), 270–271 (YL), and Tyr-319. Cys-407 is an active-site residue. An NAD(+)-binding site is contributed by Gly-489.

This sequence belongs to the urocanase family. Requires NAD(+) as cofactor.

The protein resides in the cytoplasm. The enzyme catalyses 4-imidazolone-5-propanoate = trans-urocanate + H2O. It functions in the pathway amino-acid degradation; L-histidine degradation into L-glutamate; N-formimidoyl-L-glutamate from L-histidine: step 2/3. Functionally, catalyzes the conversion of urocanate to 4-imidazolone-5-propionate. The chain is Urocanate hydratase from Shouchella clausii (strain KSM-K16) (Alkalihalobacillus clausii).